Here is a 226-residue protein sequence, read N- to C-terminus: 2-C-methyl-D-erythritol 4-phosphate cytidylyltransferase (226 aa).

It belongs to the IspD/TarI cytidylyltransferase family. IspD subfamily.

The catalysed reaction is 2-C-methyl-D-erythritol 4-phosphate + CTP + H(+) = 4-CDP-2-C-methyl-D-erythritol + diphosphate. Its pathway is isoprenoid biosynthesis; isopentenyl diphosphate biosynthesis via DXP pathway; isopentenyl diphosphate from 1-deoxy-D-xylulose 5-phosphate: step 2/6. Its function is as follows. Catalyzes the formation of 4-diphosphocytidyl-2-C-methyl-D-erythritol from CTP and 2-C-methyl-D-erythritol 4-phosphate (MEP). In Trichodesmium erythraeum (strain IMS101), this protein is 2-C-methyl-D-erythritol 4-phosphate cytidylyltransferase.